The primary structure comprises 140 residues: Large ribosomal subunit protein uL14 (140 aa).

At serine 17 the chain carries Phosphoserine. Tyrosine 38 bears the Phosphotyrosine mark.

This sequence belongs to the universal ribosomal protein uL14 family. In terms of assembly, component of the large ribosomal subunit.

The protein localises to the cytoplasm. Its function is as follows. Component of the large ribosomal subunit. The ribosome is a large ribonucleoprotein complex responsible for the synthesis of proteins in the cell. In Pongo abelii (Sumatran orangutan), this protein is Large ribosomal subunit protein uL14 (RPL23).